A 403-amino-acid polypeptide reads, in one-letter code: Phosphopentomutase (403 aa).

Mn(2+) is bound by residues Asp-13, Asp-298, His-303, Asp-339, His-340, and His-351.

Belongs to the phosphopentomutase family. Requires Mn(2+) as cofactor.

It localises to the cytoplasm. The enzyme catalyses 2-deoxy-alpha-D-ribose 1-phosphate = 2-deoxy-D-ribose 5-phosphate. It carries out the reaction alpha-D-ribose 1-phosphate = D-ribose 5-phosphate. It participates in carbohydrate degradation; 2-deoxy-D-ribose 1-phosphate degradation; D-glyceraldehyde 3-phosphate and acetaldehyde from 2-deoxy-alpha-D-ribose 1-phosphate: step 1/2. Its function is as follows. Isomerase that catalyzes the conversion of deoxy-ribose 1-phosphate (dRib-1-P) and ribose 1-phosphate (Rib-1-P) to deoxy-ribose 5-phosphate (dRib-5-P) and ribose 5-phosphate (Rib-5-P), respectively. In Streptococcus thermophilus (strain ATCC BAA-250 / LMG 18311), this protein is Phosphopentomutase.